The primary structure comprises 176 residues: RNA pyrophosphohydrolase (176 aa).

Residues 6–149 (GYRPNVGIVI…KRDVYRRVMK (144 aa)) enclose the Nudix hydrolase domain. Positions 38–59 (GGINPGESAEQAMYRELFEEVG) match the Nudix box motif.

The protein belongs to the Nudix hydrolase family. RppH subfamily. It depends on a divalent metal cation as a cofactor.

Functionally, accelerates the degradation of transcripts by removing pyrophosphate from the 5'-end of triphosphorylated RNA, leading to a more labile monophosphorylated state that can stimulate subsequent ribonuclease cleavage. This Escherichia fergusonii (strain ATCC 35469 / DSM 13698 / CCUG 18766 / IAM 14443 / JCM 21226 / LMG 7866 / NBRC 102419 / NCTC 12128 / CDC 0568-73) protein is RNA pyrophosphohydrolase.